Here is a 546-residue protein sequence, read N- to C-terminus: MYCIQCEQTLHTATGTGCRFARGDCGKTAAISDQQDALVAALLAVSSHADAARKVGLIDAEVDAFVPQALFATLTNVNFDPERLAGYIRKAQELRNRLQLALAGKPLALPALADADWPFAAAQQAEAGKIVALNRDAARIGEDVLGLRLLCLYGLKGIAAYMEHARVLGQTDTQVAAGFHAHMAYLASEPTDAKGLFAEALAIGTLNFRVMEMLDAGATGTFGDPQPTPVNRRPVAGKAILVSGHDLHDLLRILEQTAGRGINVYTHGEMLPAHGYPAFHAHPHLIGNYGSAWQNQQAEFAAFPGAIVMTSNCLIDPRTGAYQDRIFTRSIVGWPGVRHIEGEDFAEVIACAEALPGFAATEAPVTQLTGFGRNALMTAAPAVIERVKVGKIRHFYLIGGCDGARAERAYYADLARMLPQDTVVLTLGCGKFRLDGIDFGAVDGLPRLLDVGQCNDAYAAIRLALALAEAFDCGVNDLPLTLVLSWFEQKAIVILLTLLALGVKDIRVGPTAPGFLTPNLIATLNAQFGLRLISTPEETMAETLSA.

Residues cysteine 3, cysteine 6, cysteine 18, and cysteine 25 each contribute to the [4Fe-4S] cluster site. Histidine 245, glutamate 269, cysteine 313, cysteine 401, cysteine 429, cysteine 454, glutamate 488, and lysine 490 together coordinate hybrid [4Fe-2O-2S] cluster. Cysteine 401 carries the post-translational modification Cysteine persulfide.

The protein belongs to the HCP family. [4Fe-4S] cluster is required as a cofactor. The cofactor is hybrid [4Fe-2O-2S] cluster.

Its subcellular location is the cytoplasm. It carries out the reaction A + NH4(+) + H2O = hydroxylamine + AH2 + H(+). Inhibited by cyanide and by sulfide and iron reagents such as dithioerythritol, 2,2'-dipyridyl and o-phenanthroline. Its function is as follows. Could be involved in assimilation and/or detoxification of hydroxylamine, which is a toxic compound that may be formed during nitrate/nitrite assimilation. Catalyzes the reduction of hydroxylamine to form NH(3) and H(2)O. It has a low reductase activity with FAD, FMN, benzyl viologen and bromphenol blue as electrons donors, but it is not able to use NAD or NADP. The protein is Hydroxylamine reductase of Rhodobacter capsulatus (Rhodopseudomonas capsulata).